Here is a 702-residue protein sequence, read N- to C-terminus: Polyribonucleotide nucleotidyltransferase (702 aa).

Residues Asp-493 and Asp-499 each contribute to the Mg(2+) site. One can recognise a KH domain in the interval Pro-559–Ile-619. The S1 motif domain occupies Gly-643–Ala-702.

It belongs to the polyribonucleotide nucleotidyltransferase family. Mg(2+) serves as cofactor.

The protein resides in the cytoplasm. The enzyme catalyses RNA(n+1) + phosphate = RNA(n) + a ribonucleoside 5'-diphosphate. Its function is as follows. Involved in mRNA degradation. Catalyzes the phosphorolysis of single-stranded polyribonucleotides processively in the 3'- to 5'-direction. This Campylobacter lari (strain RM2100 / D67 / ATCC BAA-1060) protein is Polyribonucleotide nucleotidyltransferase.